The primary structure comprises 451 residues: Phosphoglucosamine mutase (451 aa).

S107 acts as the Phosphoserine intermediate in catalysis. S107, D246, D248, and D250 together coordinate Mg(2+). A Phosphoserine modification is found at S107.

Belongs to the phosphohexose mutase family. The cofactor is Mg(2+). Post-translationally, activated by phosphorylation.

The catalysed reaction is alpha-D-glucosamine 1-phosphate = D-glucosamine 6-phosphate. Its function is as follows. Catalyzes the conversion of glucosamine-6-phosphate to glucosamine-1-phosphate. In Burkholderia cenocepacia (strain HI2424), this protein is Phosphoglucosamine mutase.